The chain runs to 234 residues: Octanoyltransferase (234 aa).

The region spanning 35 to 221 is the BPL/LPL catalytic domain; that stretch reads DGAPELVWFL…AFQQVFASPL (187 aa). Residues 74–81, 150–152, and 163–165 each bind substrate; these read RGGQYTYH, AIG, and GIS. Cys-181 functions as the Acyl-thioester intermediate in the catalytic mechanism.

The protein belongs to the LipB family.

Its subcellular location is the cytoplasm. The enzyme catalyses octanoyl-[ACP] + L-lysyl-[protein] = N(6)-octanoyl-L-lysyl-[protein] + holo-[ACP] + H(+). The protein operates within protein modification; protein lipoylation via endogenous pathway; protein N(6)-(lipoyl)lysine from octanoyl-[acyl-carrier-protein]: step 1/2. Its function is as follows. Catalyzes the transfer of endogenously produced octanoic acid from octanoyl-acyl-carrier-protein onto the lipoyl domains of lipoate-dependent enzymes. Lipoyl-ACP can also act as a substrate although octanoyl-ACP is likely to be the physiological substrate. This chain is Octanoyltransferase, found in Hyphomonas neptunium (strain ATCC 15444).